The following is a 359-amino-acid chain: Alpha-N-acetylneuraminide alpha-2,8-sialyltransferase (359 aa).

Residues 1 to 28 are Cytoplasmic-facing; it reads MWGRWRGAGGRRGVAQPVIPQMKLLGGR. A helical; Signal-anchor for type II membrane protein membrane pass occupies residues 29–49; the sequence is VPLGASALGLLIVCWFYIFPG. Topologically, residues 50-359 are lumenal; it reads GERLPGHKEM…KKDVSSKKPH (310 aa). N-linked (GlcNAc...) asparagine glycans are attached at residues Asn73 and Asn121. 2 cysteine pairs are disulfide-bonded: Cys140–Cys289 and Cys154–Cys349. CMP-N-acetyl-beta-neuraminate contacts are provided by Asn145 and Asn168. The N-linked (GlcNAc...) asparagine glycan is linked to Asn247. CMP-N-acetyl-beta-neuraminate-binding residues include Ser276, Thr277, Gly278, Trp298, and His312. The active-site Proton donor/acceptor is the His324.

It belongs to the glycosyltransferase 29 family. In terms of tissue distribution, expressed in the dorsal blastopore lip and in the presumptive neuroectoderm in stage 11 embryos. During gastrulation, strongly expressed in the involuting mesoderm. At stages 13 and 16, expressed in the neural plate and neural fold, paraxial mesoderm and notochord. At stages 19 and 22 (neural tube and early tailbud), strongly expressed in the neural tube and notochord. At the tadpole stage, expressed in the head region, branchial arches and otic and optic primordia. Also localized in the notochord and weakly expressed in the somites. In adults, expressed in the brain and ovary. Isoform 2 (short) is expressed at a low level in the adult testis and muscle, and at a high level in the skin. Isoform 1 (long) is expressed at a high level in the adult lung and kidney. Both isoforms 1 and 2 are expressed in the gut and liver.

The protein resides in the golgi apparatus membrane. It carries out the reaction an N-acetyl-alpha-neuraminyl-(2-&gt;3)-beta-D-galactosyl derivative + CMP-N-acetyl-beta-neuraminate = an N-acetyl-alpha-neuraminyl-(2-&gt;8)-N-acetyl-alpha-neuraminyl-(2-&gt;3)-beta-D-galactosyl derivative + CMP + H(+). It catalyses the reaction a ganglioside GM3 (d18:1(4E)) + CMP-N-acetyl-beta-neuraminate = a ganglioside GD3 (d18:1(4E)) + CMP + H(+). The catalysed reaction is a ganglioside GD3 (d18:1(4E)) + CMP-N-acetyl-beta-neuraminate = a ganglioside GT3 (d18:1(4E)) + CMP + H(+). The enzyme catalyses a ganglioside GD1a (d18:1(4E)) + CMP-N-acetyl-beta-neuraminate = a ganglioside GT1a (d18:1(4E)) + CMP + H(+). It carries out the reaction a ganglioside GT1b (d18:1(4E)) + CMP-N-acetyl-beta-neuraminate = a ganglioside GQ1b (d18:1(4E)) + CMP + H(+). It catalyses the reaction a ganglioside GM1b (d18:1(4E)) + CMP-N-acetyl-beta-neuraminate = a ganglioside GD1c (d18:1(4E)) + CMP + H(+). The catalysed reaction is a ganglioside GD3 + CMP-N-acetyl-beta-neuraminate = a ganglioside GT3 + CMP + H(+). The enzyme catalyses [alpha-N-acetylneuraminyl-(2-&gt;8)](n)-alpha-N-acetylneuraminyl-(2-&gt;8)-alpha-N-acetylneuraminyl-(2-&gt;3)-beta-D-galactosyl-(1-&gt;4)-beta-D-glucosyl-(1&lt;-&gt;1)-ceramide + CMP-N-acetyl-beta-neuraminate = [alpha-N-acetylneuraminyl-(2-&gt;8)](n+1)-alpha-N-acetylneuraminyl-(2-&gt;8)-alpha-N-acetylneuraminyl-(2-&gt;3)-beta-D-galactosyl-(1-&gt;4)-beta-D-glucosyl-(1&lt;-&gt;1)-ceramide + CMP + H(+). The protein operates within protein modification; protein glycosylation. Its pathway is lipid metabolism; sphingolipid metabolism. Functionally, catalyzes the addition of sialic acid in alpha 2,8-linkage to the sialic acid moiety of the ganglioside GM3 to form ganglioside GD3; gangliosides are a subfamily of complex glycosphingolipds that contain one or more residues of sialic acid. Glycosphingolipids are required for convergence extension movements during early development. Can catalyze the addition of a second alpha-2,8- sialic acid to GD3 to form GT3. Can use GM1b, GD1a and GT1b as acceptor substrates to synthesize GD1c, GT1a and GQ1b respectively. In Xenopus laevis (African clawed frog), this protein is Alpha-N-acetylneuraminide alpha-2,8-sialyltransferase.